Reading from the N-terminus, the 306-residue chain is MVSRRQRPGSGQSEQWVLLAPESLSDDAKNLSDKTIFAKLRAPCTDKGSMFLFIDSGQQICEVKAFHEEYRSWFIGQTVQQDGRLLIATPIDPMFLVLHYLIKADKEQGKFQPVEQIVVDEEFPSCSMLLQCTPVSKSLHHVTEEKEIGSKKFYKYSKEKTLVWLKKKVELTVKVLKSSNICVGGGVQSATFIRNTQGSDVKEEDYTRYAHGLISEYLTEDLREDLSKYLGLPDLSSPTPEPPVKKRKVSEAPVEAEEDYTKFNSDSKNKKSNSKMTAAQKSLAKVDKSGMKNISAFFSPKAKATK.

The tract at residues 232 to 285 (LPDLSSPTPEPPVKKRKVSEAPVEAEEDYTKFNSDSKNKKSNSKMTAAQKSLAK) is disordered. Over residues 259-269 (DYTKFNSDSKN) the composition is skewed to basic and acidic residues.

It belongs to the RNase H2 subunit B family. As to quaternary structure, the RNase H2 complex is a heterotrimer composed of the catalytic subunit rnaseh2a and the non-catalytic subunits rnaseh2b and rnaseh2c.

The protein localises to the nucleus. In terms of biological role, non catalytic subunit of RNase H2, an endonuclease that specifically degrades the RNA of RNA:DNA hybrids. Participates in DNA replication, possibly by mediating the removal of lagging-strand Okazaki fragment RNA primers during DNA replication. Mediates the excision of single ribonucleotides from DNA:RNA duplexes. This Xenopus tropicalis (Western clawed frog) protein is Ribonuclease H2 subunit B (rnaseh2b).